Reading from the N-terminus, the 730-residue chain is Elongation factor 2 (730 aa).

The region spanning 19–260 is the tr-type G domain; the sequence is KFIRNIGIVA…MVVKHLPDPF (242 aa). GTP contacts are provided by residues 28 to 35, 94 to 98, and 148 to 151; these read AHIDHGKT, DTPGH, and NKVD. H597 is modified (diphthamide).

The protein belongs to the TRAFAC class translation factor GTPase superfamily. Classic translation factor GTPase family. EF-G/EF-2 subfamily.

The protein resides in the cytoplasm. Catalyzes the GTP-dependent ribosomal translocation step during translation elongation. During this step, the ribosome changes from the pre-translocational (PRE) to the post-translocational (POST) state as the newly formed A-site-bound peptidyl-tRNA and P-site-bound deacylated tRNA move to the P and E sites, respectively. Catalyzes the coordinated movement of the two tRNA molecules, the mRNA and conformational changes in the ribosome. The sequence is that of Elongation factor 2 from Methanosphaerula palustris (strain ATCC BAA-1556 / DSM 19958 / E1-9c).